A 223-amino-acid polypeptide reads, in one-letter code: MGRKVNPIGFRLGIVHDWESKWFAEKDRQYREQLHEDLDIRELVHRELPRAGISRIEIQRAVNRVDVTIHTAKPGVVIGKQGANVERLRQLLESRIGKKVHLNIQEIRKPELDARLVAESIAEQITRRVSYRRAMKHAAAAAMRAGAKGVKIRVKGRLGGAEMKRMVWEIVGRVPLNTIRANIDYAVVHAPTIYGQIGVKVWIYHGDVLPEARPPIAAGVVAE.

The 69-residue stretch at 40–108 folds into the KH type-2 domain; sequence IRELVHRELP…KVHLNIQEIR (69 aa).

It belongs to the universal ribosomal protein uS3 family. Part of the 30S ribosomal subunit. Forms a tight complex with proteins S10 and S14.

Functionally, binds the lower part of the 30S subunit head. Binds mRNA in the 70S ribosome, positioning it for translation. The chain is Small ribosomal subunit protein uS3 from Thermomicrobium roseum (strain ATCC 27502 / DSM 5159 / P-2).